Consider the following 109-residue polypeptide: Thioredoxin 1 (109 aa).

Residues 2–109 (SDKIIHLTDD…LKEFLDANLA (108 aa)) enclose the Thioredoxin domain. Residues Cys-33 and Cys-36 each act as nucleophile in the active site. Cys-33 and Cys-36 are joined by a disulfide. Lys-70 carries the N6-acetyllysine modification.

This sequence belongs to the thioredoxin family. Monomer.

In terms of biological role, participates in various redox reactions through the reversible oxidation of its active center dithiol to a disulfide and catalyzes dithiol-disulfide exchange reactions. The polypeptide is Thioredoxin 1 (trxA) (Escherichia coli O157:H7).